A 333-amino-acid polypeptide reads, in one-letter code: Fibronectin type III domain-containing protein 11 (333 aa).

The Fibronectin type-III domain maps to 212-310; that stretch reads PVMFDRKESV…DSLTLHTRPG (99 aa). Positions 307–333 are disordered; sequence TRPGPPEGLAPSRLGKLGLSLTTPSER.

The sequence is that of Fibronectin type III domain-containing protein 11 from Bos taurus (Bovine).